The chain runs to 53 residues: Collagen alpha-1(I) chain (53 aa).

Positions 1 to 53 are disordered; it reads SYGYBZKSAGVSVPGPMGPSGPRGLPGPPGAPGPZGFZGPPGZPGZPGSSGPM. Residue lysine 7 is modified to Allysine. A Phosphoserine modification is found at serine 8. Residues 10–23 show a composition bias toward low complexity; sequence GVSVPGPMGPSGPR. Proline 26, proline 29, proline 32, proline 41, proline 44, and proline 47 each carry 4-hydroxyproline. Over residues 34–53 the composition is skewed to low complexity; it reads PZGFZGPPGZPGZPGSSGPM.

It belongs to the fibrillar collagen family. Trimers of one alpha 2(I) and two alpha 1(I) chains. Interacts with MRC2. Interacts with TRAM2. Interacts with MFAP4 in a Ca (2+)-dependent manner. In terms of processing, contains mostly 4-hydroxyproline. Proline residues at the third position of the tripeptide repeating unit (G-X-Y) are hydroxylated in some or all of the chains. Post-translationally, contains 3-hydroxyproline at a few sites. This modification occurs on the first proline residue in the sequence motif Gly-Pro-Hyp, where Hyp is 4-hydroxyproline. Lysine residues at the third position of the tripeptide repeating unit (G-X-Y) are 5-hydroxylated in some or all of the chains. In terms of processing, O-glycosylated on hydroxylated lysine residues. The O-linked glycan consists of a Glc-Gal disaccharide. Forms the fibrils of tendon, ligaments and bones. In bones the fibrils are mineralized with calcium hydroxyapatite.

Its subcellular location is the secreted. It is found in the extracellular space. The protein localises to the extracellular matrix. In terms of biological role, type I collagen is a member of group I collagen (fibrillar forming collagen). The sequence is that of Collagen alpha-1(I) chain (COL1A1) from Oryctolagus cuniculus (Rabbit).